The following is a 232-amino-acid chain: Enolase-phosphatase E1 (232 aa).

The protein belongs to the HAD-like hydrolase superfamily. MasA/MtnC family. As to quaternary structure, monomer. It depends on Mg(2+) as a cofactor.

The catalysed reaction is 5-methylsulfanyl-2,3-dioxopentyl phosphate + H2O = 1,2-dihydroxy-5-(methylsulfanyl)pent-1-en-3-one + phosphate. It participates in amino-acid biosynthesis; L-methionine biosynthesis via salvage pathway; L-methionine from S-methyl-5-thio-alpha-D-ribose 1-phosphate: step 3/6. Its pathway is amino-acid biosynthesis; L-methionine biosynthesis via salvage pathway; L-methionine from S-methyl-5-thio-alpha-D-ribose 1-phosphate: step 4/6. Bifunctional enzyme that catalyzes the enolization of 2,3-diketo-5-methylthiopentyl-1-phosphate (DK-MTP-1-P) into the intermediate 2-hydroxy-3-keto-5-methylthiopentenyl-1-phosphate (HK-MTPenyl-1-P), which is then dephosphorylated to form the acireductone 1,2-dihydroxy-3-keto-5-methylthiopentene (DHK-MTPene). The protein is Enolase-phosphatase E1 of Xanthomonas campestris pv. campestris (strain 8004).